The following is a 118-amino-acid chain: Protein TusC (118 aa).

It belongs to the DsrF/TusC family. Heterohexamer, formed by a dimer of trimers. The hexameric TusBCD complex contains 2 copies each of TusB, TusC and TusD. The TusBCD complex interacts with TusE.

The protein localises to the cytoplasm. Its function is as follows. Part of a sulfur-relay system required for 2-thiolation of 5-methylaminomethyl-2-thiouridine (mnm(5)s(2)U) at tRNA wobble positions. This is Protein TusC from Salmonella typhi.